The primary structure comprises 1075 residues: Carbamoyl phosphate synthase large chain (1075 aa).

A carboxyphosphate synthetic domain region spans residues Pro-2–Glu-403. Residues Arg-129, Arg-169, Gly-175, Gly-176, Glu-208, Leu-210, Glu-215, Gly-241, Ile-242, His-243, Gln-285, and Glu-299 each coordinate ATP. The ATP-grasp 1 domain maps to Asp-133–Val-328. Residues Gln-285, Glu-299, and Asn-301 each contribute to the Mg(2+) site. Mn(2+) is bound by residues Gln-285, Glu-299, and Asn-301. The tract at residues Val-404 to Ala-553 is oligomerization domain. Positions Asn-554–Asn-936 are carbamoyl phosphate synthetic domain. The 192-residue stretch at Gln-679–Ala-870 folds into the ATP-grasp 2 domain. Residues Arg-715, Arg-754, Leu-756, Glu-761, Gly-786, Val-787, His-788, Ser-789, Gln-829, and Glu-841 each contribute to the ATP site. Positions 829, 841, and 843 each coordinate Mg(2+). Residues Gln-829, Glu-841, and Asn-843 each coordinate Mn(2+). The MGS-like domain maps to Ser-937–Ser-1075. An allosteric domain region spans residues Ser-937–Ser-1075.

This sequence belongs to the CarB family. Composed of two chains; the small (or glutamine) chain promotes the hydrolysis of glutamine to ammonia, which is used by the large (or ammonia) chain to synthesize carbamoyl phosphate. Tetramer of heterodimers (alpha,beta)4. It depends on Mg(2+) as a cofactor. The cofactor is Mn(2+).

It catalyses the reaction hydrogencarbonate + L-glutamine + 2 ATP + H2O = carbamoyl phosphate + L-glutamate + 2 ADP + phosphate + 2 H(+). The enzyme catalyses hydrogencarbonate + NH4(+) + 2 ATP = carbamoyl phosphate + 2 ADP + phosphate + 2 H(+). The protein operates within amino-acid biosynthesis; L-arginine biosynthesis; carbamoyl phosphate from bicarbonate: step 1/1. It functions in the pathway pyrimidine metabolism; UMP biosynthesis via de novo pathway; (S)-dihydroorotate from bicarbonate: step 1/3. In terms of biological role, large subunit of the glutamine-dependent carbamoyl phosphate synthetase (CPSase). CPSase catalyzes the formation of carbamoyl phosphate from the ammonia moiety of glutamine, carbonate, and phosphate donated by ATP, constituting the first step of 2 biosynthetic pathways, one leading to arginine and/or urea and the other to pyrimidine nucleotides. The large subunit (synthetase) binds the substrates ammonia (free or transferred from glutamine from the small subunit), hydrogencarbonate and ATP and carries out an ATP-coupled ligase reaction, activating hydrogencarbonate by forming carboxy phosphate which reacts with ammonia to form carbamoyl phosphate. In Salmonella typhimurium (strain LT2 / SGSC1412 / ATCC 700720), this protein is Carbamoyl phosphate synthase large chain.